A 248-amino-acid polypeptide reads, in one-letter code: Probable septum site-determining protein MinC (248 aa).

The disordered stretch occupies residues 115–144 (PTAVSPPPPPPPPARAEPAPPAARPAPGRM). A compositionally biased stretch (pro residues) spans 118 to 138 (VSPPPPPPPPARAEPAPPAAR).

The protein belongs to the MinC family. As to quaternary structure, interacts with MinD and FtsZ.

Functionally, cell division inhibitor that blocks the formation of polar Z ring septums. Rapidly oscillates between the poles of the cell to destabilize FtsZ filaments that have formed before they mature into polar Z rings. Prevents FtsZ polymerization. The protein is Probable septum site-determining protein MinC of Xanthomonas euvesicatoria pv. vesicatoria (strain 85-10) (Xanthomonas campestris pv. vesicatoria).